The primary structure comprises 213 residues: Small ribosomal subunit protein uS3c (213 aa).

The KH type-2 domain occupies 39 to 109; that stretch reads IRKYLNAKLA…KFRITITYLQ (71 aa).

Belongs to the universal ribosomal protein uS3 family. Part of the 30S ribosomal subunit.

The protein localises to the plastid. Its subcellular location is the chloroplast. The chain is Small ribosomal subunit protein uS3c (rps3) from Mesostigma viride (Green alga).